Here is a 358-residue protein sequence, read N- to C-terminus: MATDDDSFPWDQDSILSRDLLSASSLQLCYENLNRSCVRSPYSPGSRLILYAVFGFGAVLAVCGNLLVMTSILHFRQLHSPANFLVASLACADLLVGLTVMPFSMVRSVEGCWYFGNTYCKFHSCFEGSFCYSSLFHLCFISLDRYIAVSDPLIYPTRFTASISGKCITFSWLLSIIYSFSLLYTGANEAGLEDLVSALTCVGGCQVAVNQSWVFINFLLFLVPALVMMTVYSKIFLIAKQQAQNIEKMSKQTARASESYKDRVAKRERKAAKTLGIAVAAFLLSWLPYFIDSIIDAFLGFITPTYMYEILVWIVYYNSAMNPLIYAFFYPWFRKAIKLIVTGKILRENSSTINLFPE.

Topologically, residues 1–47 (MATDDDSFPWDQDSILSRDLLSASSLQLCYENLNRSCVRSPYSPGSR) are extracellular. N-linked (GlcNAc...) asparagine glycosylation is present at asparagine 34. 2 cysteine pairs are disulfide-bonded: cysteine 37–cysteine 201 and cysteine 120–cysteine 205. A helical membrane pass occupies residues 48–68 (LILYAVFGFGAVLAVCGNLLV). The Cytoplasmic segment spans residues 69 to 83 (MTSILHFRQLHSPAN). The helical transmembrane segment at 84–104 (FLVASLACADLLVGLTVMPFS) threads the bilayer. At 105 to 125 (MVRSVEGCWYFGNTYCKFHSC) the chain is on the extracellular side. A helical transmembrane segment spans residues 126–148 (FEGSFCYSSLFHLCFISLDRYIA). Topologically, residues 149–166 (VSDPLIYPTRFTASISGK) are cytoplasmic. The helical transmembrane segment at 167–187 (CITFSWLLSIIYSFSLLYTGA) threads the bilayer. Residues 188–211 (NEAGLEDLVSALTCVGGCQVAVNQ) are Extracellular-facing. The chain crosses the membrane as a helical span at residues 212 to 232 (SWVFINFLLFLVPALVMMTVY). Residues 233-274 (SKIFLIAKQQAQNIEKMSKQTARASESYKDRVAKRERKAAKT) are Cytoplasmic-facing. Residues 275–295 (LGIAVAAFLLSWLPYFIDSII) traverse the membrane as a helical segment. The Extracellular segment spans residues 296–309 (DAFLGFITPTYMYE). A helical membrane pass occupies residues 310–332 (ILVWIVYYNSAMNPLIYAFFYPW). The Cytoplasmic segment spans residues 333–358 (FRKAIKLIVTGKILRENSSTINLFPE).

Belongs to the G-protein coupled receptor 1 family.

The protein resides in the cell membrane. In terms of biological role, olfactory receptor specific for N,N-dimethylalkylamines trace amines. Trace amine compounds are enriched in animal body fluids and act on trace amine-associated receptors (TAARs) to elicit both intraspecific and interspecific innate behaviors. Ligand-binding causes a conformation change that triggers signaling via G(s)-class of G alpha proteins (GNAL or GNAS). In Rattus norvegicus (Rat), this protein is Trace amine-associated receptor 7c.